We begin with the raw amino-acid sequence, 342 residues long: Heparan sulfate glucosamine 3-O-sulfotransferase 6 (342 aa).

The Cytoplasmic portion of the chain corresponds to Met1–Pro31. A helical; Signal-anchor for type II membrane protein membrane pass occupies residues Leu32 to Gly49. The Lumenal portion of the chain corresponds to Arg50–Asp342. Positions Arg56–Arg75 are disordered. Lys100–Arg104 is a 3'-phosphoadenylyl sulfate binding site. Residues Glu122 to Arg128 and Lys153 to Ser156 each bind substrate. 3'-phosphoadenylyl sulfate-binding residues include Arg181 and Ser189. Substrate is bound at residue Trp220–Ser221. The N-linked (GlcNAc...) asparagine glycan is linked to Asn281. Cysteines 288 and 300 form a disulfide. 3'-phosphoadenylyl sulfate is bound at residue Lys305–His309.

It belongs to the sulfotransferase 1 family. As to expression, expressed in liver and kidney, followed by heart, brain, lung and testis.

The protein resides in the golgi apparatus membrane. It carries out the reaction alpha-D-glucosaminyl-[heparan sulfate](n) + 3'-phosphoadenylyl sulfate = 3-sulfo-alpha-D-glucosaminyl-[heparan sulfate](n) + adenosine 3',5'-bisphosphate + H(+). Its function is as follows. Sulfotransferase that utilizes 3'-phospho-5'-adenylyl sulfate (PAPS) to catalyze the transfer of a sulfo group to heparan sulfate. Unlike 3-OST-1, does not convert non-anticoagulant heparan sulfate to anticoagulant heparan sulfate. This is Heparan sulfate glucosamine 3-O-sulfotransferase 6 (Hs3st6) from Mus musculus (Mouse).